The primary structure comprises 340 residues: Glycerol-3-phosphate dehydrogenase [NAD(P)+] (340 aa).

NADPH is bound by residues Ser-15, Tyr-16, His-36, and Lys-110. Sn-glycerol 3-phosphate-binding residues include Lys-110, Gly-139, and Thr-141. Ala-143 provides a ligand contact to NADPH. Sn-glycerol 3-phosphate-binding residues include Lys-195, Asp-248, Ser-258, Arg-259, and Asn-260. Residue Lys-195 is the Proton acceptor of the active site. Arg-259 lines the NADPH pocket. Positions 283 and 285 each coordinate NADPH.

Belongs to the NAD-dependent glycerol-3-phosphate dehydrogenase family.

The protein localises to the cytoplasm. It carries out the reaction sn-glycerol 3-phosphate + NAD(+) = dihydroxyacetone phosphate + NADH + H(+). The enzyme catalyses sn-glycerol 3-phosphate + NADP(+) = dihydroxyacetone phosphate + NADPH + H(+). The protein operates within membrane lipid metabolism; glycerophospholipid metabolism. Its function is as follows. Catalyzes the reduction of the glycolytic intermediate dihydroxyacetone phosphate (DHAP) to sn-glycerol 3-phosphate (G3P), the key precursor for phospholipid synthesis. The sequence is that of Glycerol-3-phosphate dehydrogenase [NAD(P)+] from Baumannia cicadellinicola subsp. Homalodisca coagulata.